Reading from the N-terminus, the 373-residue chain is Septin homolog spn3 (373 aa).

Positions 10 to 286 (KGIPLNLMVV…ETYRTEKLST (277 aa)) constitute a Septin-type G domain. Residues 20–27 (GDVGLGRT) form a G1 motif region. Residue 20 to 27 (GDVGLGRT) coordinates GTP. The G3 motif stretch occupies residues 79–82 (DTPH). Positions 161–164 (AKAD) are G4 motif. Residues 162 to 170 (KADSLTAQE) and arginine 235 contribute to the GTP site. Phosphoserine is present on serine 303. The stretch at 311–357 (EDRLRAIELSVQKEIEEKRRQLLAREEALRALEEKLAASTAAMANAS) forms a coiled coil.

This sequence belongs to the TRAFAC class TrmE-Era-EngA-EngB-Septin-like GTPase superfamily. Septin GTPase family. As to quaternary structure, component of the septin complex composed of two copies of each spn1, spn2, spn3 and spn4.

It localises to the cytoplasm. The protein resides in the cell cortex. Functionally, plays a role in the cell cycle. Involved in a late stage of septum formation leading to the separation of the daughter cells. The chain is Septin homolog spn3 (spn3) from Schizosaccharomyces pombe (strain 972 / ATCC 24843) (Fission yeast).